Here is a 241-residue protein sequence, read N- to C-terminus: Lipopolysaccharide export system ATP-binding protein LptB (241 aa).

Residues 4-237 (LTAENLAKSY…EQVKRVYLGE (234 aa)) form the ABC transporter domain. Position 36 to 43 (36 to 43 (GPNGAGKT)) interacts with ATP.

The protein belongs to the ABC transporter superfamily. Outer membrane lipopolysaccharide export (TC 1.B.42) family. Component of the lipopolysaccharide transport and assembly complex. The LptBFG transporter is composed of two ATP-binding proteins (LptB) and two transmembrane proteins (LptF and LptG).

Its subcellular location is the cytoplasm. It localises to the cell inner membrane. In terms of biological role, part of the ABC transporter complex LptBFG involved in the translocation of lipopolysaccharide (LPS) from the inner membrane to the outer membrane. Probably responsible for energy coupling to the transport system. The polypeptide is Lipopolysaccharide export system ATP-binding protein LptB (lptB) (Haemophilus influenzae (strain ATCC 51907 / DSM 11121 / KW20 / Rd)).